The chain runs to 159 residues: Transcription elongation factor GreA (159 aa).

The stretch at 45 to 67 (NAEYHEARKEQSFVEGKIRELQL) forms a coiled coil.

It belongs to the GreA/GreB family.

Its function is as follows. Necessary for efficient RNA polymerase transcription elongation past template-encoded arresting sites. The arresting sites in DNA have the property of trapping a certain fraction of elongating RNA polymerases that pass through, resulting in locked ternary complexes. Cleavage of the nascent transcript by cleavage factors such as GreA or GreB allows the resumption of elongation from the new 3'terminus. GreA releases sequences of 2 to 3 nucleotides. This Neorickettsia sennetsu (strain ATCC VR-367 / Miyayama) (Ehrlichia sennetsu) protein is Transcription elongation factor GreA.